Reading from the N-terminus, the 224-residue chain is Putative carbamate hydrolase RutD (224 aa).

The region spanning 14 to 115 (PVVVLISGLG…TVLVSVNGWL (102 aa)) is the AB hydrolase-1 domain.

The protein belongs to the AB hydrolase superfamily. Hydrolase RutD family.

The catalysed reaction is carbamate + 2 H(+) = NH4(+) + CO2. In terms of biological role, involved in pyrimidine catabolism. May facilitate the hydrolysis of carbamate, a reaction that can also occur spontaneously. The protein is Putative carbamate hydrolase RutD of Shigella dysenteriae serotype 1 (strain Sd197).